The following is a 117-amino-acid chain: DNA-directed RNA polymerase subunit omega (117 aa).

Residues 96–105 (KEEAEEEAKQ) are compositionally biased toward basic and acidic residues. The tract at residues 96 to 117 (KEEAEEEAKQKNSRAAKAAAAE) is disordered. The span at 108-117 (SRAAKAAAAE) shows a compositional bias: low complexity.

Belongs to the RNA polymerase subunit omega family. In terms of assembly, the RNAP catalytic core consists of 2 alpha, 1 beta, 1 beta' and 1 omega subunit. When a sigma factor is associated with the core the holoenzyme is formed, which can initiate transcription.

It carries out the reaction RNA(n) + a ribonucleoside 5'-triphosphate = RNA(n+1) + diphosphate. Its function is as follows. Promotes RNA polymerase assembly. Latches the N- and C-terminal regions of the beta' subunit thereby facilitating its interaction with the beta and alpha subunits. This Lactococcus lactis subsp. lactis (strain IL1403) (Streptococcus lactis) protein is DNA-directed RNA polymerase subunit omega (rpoZ).